We begin with the raw amino-acid sequence, 496 residues long: Transcription factor CP2 (496 aa).

In terms of domain architecture, Grh/CP2 DB spans 61–300 (ENKILPFQYV…SPGFNSSHSS (240 aa)). The interval 133–386 (EHQQLEGWRW…LFNALKGRMV (254 aa)) is DNA-binding. Disordered regions lie at residues 238 to 268 (FKPK…YQPS) and 296 to 327 (SSHS…LLPT). Residues 241 to 265 (KGADRKQKTDREKMEKRTPHEKEKY) are compositionally biased toward basic and acidic residues.

The protein belongs to the grh/CP2 family. CP2 subfamily. As to quaternary structure, component of the SSP (stage selector protein) complex, which appears to be a heteromer of TFCP2 and 2 copies of NFE4. In terms of tissue distribution, expressed in the epiblast at the pre-primitive streak stage. At the primitive streak stage, expressed in the extending primitive streak and in the prospective neural plate. At stages 7 and 8, expressed in the neural folds, somites and in the regressing primitive streak. At stage 12, ubiquitously expressed in the whole embryo.

It localises to the nucleus. In terms of biological role, binds the B-response element 5'-CAAGTCCAGGCAAGT-3' of the ENS1/ERNI promoter. May be the major transcription activator thus being essential for its expression. The protein is Transcription factor CP2 (TFCP2) of Gallus gallus (Chicken).